The chain runs to 401 residues: Argininosuccinate synthase (401 aa).

8 to 16 (AYSGGLDTS) is a binding site for ATP. Residue Tyr-85 coordinates L-citrulline. Gly-115 provides a ligand contact to ATP. 3 residues coordinate L-aspartate: Thr-117, Asn-121, and Asp-122. L-citrulline is bound at residue Asn-121. 4 residues coordinate L-citrulline: Arg-125, Ser-173, Glu-258, and Tyr-270.

Belongs to the argininosuccinate synthase family. Type 1 subfamily. As to quaternary structure, homotetramer.

The protein resides in the cytoplasm. It catalyses the reaction L-citrulline + L-aspartate + ATP = 2-(N(omega)-L-arginino)succinate + AMP + diphosphate + H(+). Its pathway is amino-acid biosynthesis; L-arginine biosynthesis; L-arginine from L-ornithine and carbamoyl phosphate: step 2/3. This chain is Argininosuccinate synthase, found in Staphylococcus carnosus (strain TM300).